An 872-amino-acid polypeptide reads, in one-letter code: Chaperone protein ClpB 2 (872 aa).

Positions 6–148 (PNKFTEKAWE…AEIIKQIRGT (143 aa)) constitute a Clp R domain. Repeat regions lie at residues 9 to 73 (FTEK…IAQQ) and 85 to 148 (LGRS…IRGT). Residues 161-342 (ESLEKYGRDL…RRFQEVLVDE (182 aa)) form an NBD1 region. An ATP-binding site is contributed by 208–215 (GEPGVGKT). The linker stretch occupies residues 343 to 551 (PNVLDTISIL…IAEIISKWTG (209 aa)). Positions 393–527 (IDLVDEAAAK…LETQLAEQQT (135 aa)) form a coiled coil. Positions 561–772 (EKEKLLHLED…RVDETIIFHG (212 aa)) are NBD2. 611–618 (GPTGVGKT) is a binding site for ATP. Positions 773–872 (LQKSELRSIV…TSLRGDLVIV (100 aa)) are C-terminal.

It belongs to the ClpA/ClpB family. Homohexamer. The oligomerization is ATP-dependent.

Its subcellular location is the cytoplasm. In terms of biological role, part of a stress-induced multi-chaperone system, it is involved in the recovery of the cell from heat-induced damage, in cooperation with DnaK, DnaJ and GrpE. Acts before DnaK, in the processing of protein aggregates. Protein binding stimulates the ATPase activity; ATP hydrolysis unfolds the denatured protein aggregates, which probably helps expose new hydrophobic binding sites on the surface of ClpB-bound aggregates, contributing to the solubilization and refolding of denatured protein aggregates by DnaK. The chain is Chaperone protein ClpB 2 (clpB2) from Synechocystis sp. (strain ATCC 27184 / PCC 6803 / Kazusa).